The chain runs to 123 residues: Pre-B lymphocyte protein 3 (123 aa).

Positions 1–20 (MACRCLSFLLMGTFLSVSQT) are cleaved as a signal peptide. In terms of domain architecture, Ig-like spans 21–123 (VLAQLDALLV…YCSVGYGFSP (103 aa)). The cysteines at positions 40 and 115 are disulfide-linked.

Belongs to the immunoglobulin superfamily. In terms of tissue distribution, expressed in B-cell precursors. Expressed in fetal liver, bone marrow, spleen and lymph node.

In terms of biological role, associates with the Ig-mu chain to form a molecular complex that is expressed on the surface of pre-B-cells. In Homo sapiens (Human), this protein is Pre-B lymphocyte protein 3 (VPREB3).